Reading from the N-terminus, the 411-residue chain is Serine--tRNA ligase (411 aa).

226-228 (TSE) is an L-serine binding site. 257-259 (RKE) serves as a coordination point for ATP. Glu-280 contributes to the L-serine binding site. Residue 344–347 (EISS) coordinates ATP. Position 379 (Ser-379) interacts with L-serine.

It belongs to the class-II aminoacyl-tRNA synthetase family. Type-1 seryl-tRNA synthetase subfamily. In terms of assembly, homodimer. The tRNA molecule binds across the dimer.

It localises to the cytoplasm. It catalyses the reaction tRNA(Ser) + L-serine + ATP = L-seryl-tRNA(Ser) + AMP + diphosphate + H(+). It carries out the reaction tRNA(Sec) + L-serine + ATP = L-seryl-tRNA(Sec) + AMP + diphosphate + H(+). It functions in the pathway aminoacyl-tRNA biosynthesis; selenocysteinyl-tRNA(Sec) biosynthesis; L-seryl-tRNA(Sec) from L-serine and tRNA(Sec): step 1/1. Catalyzes the attachment of serine to tRNA(Ser). Is also able to aminoacylate tRNA(Sec) with serine, to form the misacylated tRNA L-seryl-tRNA(Sec), which will be further converted into selenocysteinyl-tRNA(Sec). This is Serine--tRNA ligase from Campylobacter jejuni subsp. doylei (strain ATCC BAA-1458 / RM4099 / 269.97).